The sequence spans 206 residues: Undecaprenyl-diphosphatase (206 aa).

Helical transmembrane passes span 5-25 (YYWI…LIGG), 53-73 (FLSK…LLIF), 79-99 (IGIT…VSKY), 138-158 (VTLL…EAVL), and 164-184 (VYVG…GSWI).

It localises to the cell membrane. The catalysed reaction is di-trans,octa-cis-undecaprenyl diphosphate + H2O = di-trans,octa-cis-undecaprenyl phosphate + phosphate + H(+). This chain is Undecaprenyl-diphosphatase (sepP), found in Sulfolobus acidocaldarius (strain ATCC 33909 / DSM 639 / JCM 8929 / NBRC 15157 / NCIMB 11770).